Consider the following 273-residue polypeptide: Ribosomal RNA small subunit methyltransferase A (273 aa).

Residues N18, L20, G45, E66, D91, and N113 each contribute to the S-adenosyl-L-methionine site.

It belongs to the class I-like SAM-binding methyltransferase superfamily. rRNA adenine N(6)-methyltransferase family. RsmA subfamily.

It localises to the cytoplasm. It catalyses the reaction adenosine(1518)/adenosine(1519) in 16S rRNA + 4 S-adenosyl-L-methionine = N(6)-dimethyladenosine(1518)/N(6)-dimethyladenosine(1519) in 16S rRNA + 4 S-adenosyl-L-homocysteine + 4 H(+). Its function is as follows. Specifically dimethylates two adjacent adenosines (A1518 and A1519) in the loop of a conserved hairpin near the 3'-end of 16S rRNA in the 30S particle. May play a critical role in biogenesis of 30S subunits. In Enterobacter sp. (strain 638), this protein is Ribosomal RNA small subunit methyltransferase A.